The chain runs to 430 residues: Histidinol dehydrogenase (430 aa).

Tyrosine 129, glutamine 190, and asparagine 213 together coordinate NAD(+). Substrate is bound by residues serine 236, glutamine 258, and histidine 261. Residues glutamine 258 and histidine 261 each contribute to the Zn(2+) site. Active-site proton acceptor residues include glutamate 326 and histidine 327. Residues histidine 327, aspartate 360, glutamate 414, and histidine 419 each coordinate substrate. Residue aspartate 360 participates in Zn(2+) binding. Residue histidine 419 coordinates Zn(2+).

It belongs to the histidinol dehydrogenase family. It depends on Zn(2+) as a cofactor.

It carries out the reaction L-histidinol + 2 NAD(+) + H2O = L-histidine + 2 NADH + 3 H(+). It participates in amino-acid biosynthesis; L-histidine biosynthesis; L-histidine from 5-phospho-alpha-D-ribose 1-diphosphate: step 9/9. Its function is as follows. Catalyzes the sequential NAD-dependent oxidations of L-histidinol to L-histidinaldehyde and then to L-histidine. The chain is Histidinol dehydrogenase from Caldanaerobacter subterraneus subsp. tengcongensis (strain DSM 15242 / JCM 11007 / NBRC 100824 / MB4) (Thermoanaerobacter tengcongensis).